The chain runs to 436 residues: GTPase Der (436 aa).

2 EngA-type G domains span residues 4-167 and 175-351; these read PTVA…PVEE and IRFS…ESQN. GTP contacts are provided by residues 10 to 17, 57 to 61, 119 to 122, 181 to 188, 229 to 233, and 294 to 297; these read GRPNVGKS, DTGGI, NKVD, DTAGM, and NKWD. One can recognise a KH-like domain in the interval 352-436; sequence KRIPSAVLND…PIHLIARKRK (85 aa).

This sequence belongs to the TRAFAC class TrmE-Era-EngA-EngB-Septin-like GTPase superfamily. EngA (Der) GTPase family. In terms of assembly, associates with the 50S ribosomal subunit.

In terms of biological role, GTPase that plays an essential role in the late steps of ribosome biogenesis. The protein is GTPase Der of Streptococcus pyogenes serotype M2 (strain MGAS10270).